The primary structure comprises 511 residues: Centrosomal protein CCDC61 (511 aa).

A head domain region spans residues 1-144 (MEVGTVVQEE…PLPLPYLGKP (144 aa)). Residues 147–272 (AELQKEIRAL…RVKSLTTELA (126 aa)) adopt a coiled-coil conformation. 2 disordered regions span residues 306 to 403 (TRVG…SREP) and 447 to 486 (RGRK…SMDT). Residues 315–335 (GSRERIEDRGRRSEERVRRAD) show a composition bias toward basic and acidic residues. Residues 338–352 (GSRNCITRPSPSPTG) show a composition bias toward polar residues. A compositionally biased stretch (basic and acidic residues) spans 366-378 (DRQRRQKEAELKS).

This sequence belongs to the CCDC61 family. Forms homodimers (via head domain).

Its subcellular location is the cytoplasm. The protein localises to the cytoskeleton. It is found in the microtubule organizing center. The protein resides in the centrosome. It localises to the centriolar satellite. Its subcellular location is the cilium basal body. In terms of biological role, microtubule-binding centrosomal protein required for centriole cohesion, independently of the centrosome-associated protein/CEP250 and rootletin/CROCC linker. In interphase, required for anchoring microtubule at the mother centriole subdistal appendages and for centrosome positioning. During mitosis, may be involved in spindle assembly and chromatin alignment by regulating the organization of spindle microtubules into a symmetrical structure. Plays a non-essential role in ciliogenesis. This chain is Centrosomal protein CCDC61, found in Danio rerio (Zebrafish).